A 129-amino-acid polypeptide reads, in one-letter code: 3-aminoacrylate deaminase RutC (129 aa).

The protein belongs to the RutC family.

It carries out the reaction (Z)-3-aminoacrylate + H2O + H(+) = 3-oxopropanoate + NH4(+). Functionally, involved in pyrimidine catabolism. Catalyzes the deamination of 3-aminoacrylate to malonic semialdehyde, a reaction that can also occur spontaneously. RutC may facilitate the reaction and modulate the metabolic fitness, rather than catalyzing essential functions. This chain is 3-aminoacrylate deaminase RutC, found in Yersinia enterocolitica serotype O:8 / biotype 1B (strain NCTC 13174 / 8081).